Reading from the N-terminus, the 641-residue chain is Uromodulin (641 aa).

Positions 1 to 24 (MGQPPLTWMLMVVVASWFITTAAT) are cleaved as a signal peptide. Asn25 carries an N-linked (GlcNAc...) asparagine glycan. One can recognise an EGF-like 1 domain in the interval 28-64 (EARWCSECHSNATCTEDEAVTTCTCQEGFTGDGLTCV). 21 cysteine pairs are disulfide-bonded: Cys32–Cys41, Cys35–Cys50, Cys52–Cys63, Cys69–Cys83, Cys77–Cys92, Cys94–Cys106, Cys112–Cys126, Cys120–Cys135, Cys137–Cys148, Cys150–Cys161, Cys155–Cys170, Cys174–Cys267, Cys195–Cys282, Cys217–Cys255, Cys223–Cys287, Cys248–Cys256, Cys297–Cys306, Cys300–Cys315, Cys317–Cys347, Cys335–Cys425, and Cys366–Cys389. Positions 65–107 (DLDECAIPGAHNCSANSSCVNTPGSFSCVCPEGFRLSPGLGCT) constitute an EGF-like 2; calcium-binding domain. Residue Asn76 is glycosylated (N-linked (GlcNAc...) asparagine). The EGF-like 3; calcium-binding domain occupies 108 to 149 (DVDECAEPGLSHCHALATCVNVVGNYLCVCPAGYRGDGWHCE). Residues 150-171 (CSPGSCGPGLDCVPEGDALVCA) are beta hairpin. Residues 172–291 (DPCQAHRTLD…CHLAYCTDPS (120 aa)) are D10C. Asn232 carries an N-linked (GlcNAc...) asparagine glycan. An N-linked (GlcNAc...) asparagine glycan is attached at Asn275. One can recognise an EGF-like 4 domain in the interval 292-323 (SVEGTCEECSIDEDCKSDNGRWHCQCKQDFNI). Asn322 is a glycosylation site (N-linked (GlcNAc...) asparagine). The interval 334–429 (ECGANDMKVS…KINFACSYPL (96 aa)) is ZP-N. The ZP domain maps to 334 to 589 (ECGANDMKVS…PTCSGTRFRS (256 aa)). Positions 430–453 (DMKVSLKTSLQPVVSALNITVGGT) are flexible ZP-N/ZP-C linker; important for secretion and polymerization into filaments. The N-linked (GlcNAc...) asparagine glycan is linked to Asn447. Residues 454 to 464 (GMFTVRMALFQ) are internal hydrophobic patch (IHP). The segment at 454 to 589 (GMFTVRMALF…PTCSGTRFRS (136 aa)) is ZP-C. Cystine bridges form between Cys506/Cys566, Cys527/Cys582, and Cys571/Cys578. Positions 586–589 (RFRS) are essential for cleavage by HPN. The segment at 598–606 (VLNLGPITR) is external hydrophobic patch (EHP); regulates polymerization into filaments. The GPI-anchor amidated serine moiety is linked to residue Ser614. Residues 615–641 (RAAFSSLGLLKVWLPLLLSATLTLTFQ) constitute a propeptide, removed in mature form.

As to quaternary structure, homodimer that then polymerizes into long filaments. The filaments can additionally assemble laterally to form a sheet. The filaments consist of a zigzag-shaped backbone with laterally protruding arms which interact with bacterial adhesin fimH. Two fimH molecules can bind to a single UMOD monomer. In terms of processing, N-glycosylated. Proteolytically cleaved at a conserved C-terminal proteolytic cleavage site to generate the secreted form found in urine. This cleavage is catalyzed by HPN.

Its subcellular location is the apical cell membrane. The protein resides in the basolateral cell membrane. The protein localises to the cell projection. It is found in the cilium membrane. It localises to the secreted. Functions in biogenesis and organization of the apical membrane of epithelial cells of the thick ascending limb of Henle's loop (TALH), where it promotes formation of complex filamentous gel-like structure that may play a role in the water barrier permeability. May serve as a receptor for binding and endocytosis of cytokines (IL-1, IL-2) and TNF. Facilitates neutrophil migration across renal epithelia. Functionally, in the urine, may contribute to colloid osmotic pressure, retards passage of positively charged electrolytes, and inhibits formation of liquid containing supersaturated salts and subsequent formation of salt crystals. Protects against urinary tract infections by binding to type 1 fimbriated E.coli. Binds to bacterial adhesin fimH which mediates the stable formation of bacterial aggregates, prevents the binding of E.coli to uroplakins UPK1A and UPK1B which act as urothelial receptors for type I fimbriae, and allows for pathogen clearance through micturation. Also promotes aggregation of other bacteria including K.pneumoniae, P.aeruginosa and S.mitis and so may also protect against other uropathogens. This Pongo abelii (Sumatran orangutan) protein is Uromodulin (UMOD).